The following is a 679-amino-acid chain: Sodium-dependent phosphate transporter 1 (679 aa).

6 helical membrane passes run 21-41, 62-82, 100-120, 158-178, 203-223, and 230-250; these read YLWM…SVGA, ACIL…AKVS, GLLM…QLVA, IVMS…ILFF, ACTV…LLGF, and GTIL…WFFV. Ser-265 and Ser-269 each carry phosphoserine. Residues 268–288 are disordered; that stretch reads ESPLMEKKNSLKEDHEETKLS. Residues 271–286 are compositionally biased toward basic and acidic residues; the sequence is LMEKKNSLKEDHEETK. The next 4 helical transmembrane spans lie at 511-531, 558-578, 600-620, and 650-670; these read VSLL…FAHG, VATP…GLWV, FSIE…GLPI, and IFMA…AIMA. The segment at 550–558 is a; sequence DTGDVSSKV.

The protein belongs to the inorganic phosphate transporter (PiT) (TC 2.A.20) family.

Its subcellular location is the cell membrane. It carries out the reaction 2 Na(+)(out) + phosphate(out) = 2 Na(+)(in) + phosphate(in). Functionally, sodium-phosphate symporter which preferentially transports the monovalent form of phosphate with a stoichiometry of two sodium ions per phosphate ion. May play a role in extracellular matrix and cartilage calcification as well as in vascular calcification. Essential for cell proliferation but this function is independent of its phosphate transporter activity. The sequence is that of Sodium-dependent phosphate transporter 1 (SLC20A1) from Pongo abelii (Sumatran orangutan).